A 259-amino-acid polypeptide reads, in one-letter code: Expansin-B4 (259 aa).

A signal peptide spans methionine 1–cysteine 23. N-linked (GlcNAc...) asparagine glycosylation occurs at asparagine 25. One can recognise an Expansin-like EG45 domain in the interval glycine 51–threonine 161. 3 cysteine pairs are disulfide-bonded: cysteine 54–cysteine 83, cysteine 86–cysteine 156, and cysteine 91–cysteine 97. Residues tyrosine 174–serine 255 enclose the Expansin-like CBD domain.

The protein belongs to the expansin family. Expansin B subfamily.

It localises to the secreted. Its subcellular location is the cell wall. The protein localises to the membrane. Functionally, may cause loosening and extension of plant cell walls by disrupting non-covalent bonding between cellulose microfibrils and matrix glucans. No enzymatic activity has been found. The sequence is that of Expansin-B4 (EXPB4) from Arabidopsis thaliana (Mouse-ear cress).